Consider the following 81-residue polypeptide: Ferredoxin (81 aa).

The 4Fe-4S ferredoxin-type domain maps to Lys-2–Asp-30. 4 residues coordinate [4Fe-4S] cluster: Cys-11, Cys-14, Cys-17, and Cys-61.

Requires [4Fe-4S] cluster as cofactor.

Functionally, ferredoxins are iron-sulfur proteins that transfer electrons in a wide variety of metabolic reactions. This Bacillus thermoproteolyticus protein is Ferredoxin.